A 204-amino-acid polypeptide reads, in one-letter code: CLAVATA3/ESR (CLE)-related protein 1 (204 aa).

A signal peptide spans 1 to 21 (MAKNAMLCLLILSVVLALAFA). The interval 21-83 (ATNEKDDKEA…SNQLQNAYRM (63 aa)) is required for secretion from the host cytoplasm to the host apoplasm. Residue N32 is glycosylated (N-linked (GlcNAc...) asparagine). The tract at residues 116 to 204 (RNTGMKPQSY…TPGVPDRQHR (89 aa)) is disordered. 3 stretches are compositionally biased toward basic and acidic residues: residues 139–151 (LHNREKILEEQKR), 160–172 (LHNREKTLEEQKR), and 181–193 (LHNREKTLEEQKR). 3 propeptides (removed in mature form) span residues 142-150 (REKILEEQK), 163-171 (REKTLEEQK), and 184-192 (REKTLEEQK).

It belongs to the CLV3/ESR signal peptide family. Post-translationally, preprocessing of the precursor by host proteases leads first to the production of 21-mer CLE-containing peptides (Arg-130 to Lys-150, Arg-151 to Lys-171 and Arg-172 to Lys-192) followed by an ultimate C-term trimming to give the mature 12-mer CLE1-1 peptide. Highly expressed exclusively within the dorsal esophageal gland cell during syncytium formation in host plants.

Its subcellular location is the secreted. It is found in the host cytoplasm. It localises to the host extracellular space. The protein resides in the extracellular space. The protein localises to the apoplast. Mimics host plant CLE extracellular signal peptides that regulate cell fate. May play a role in the differentiation or division of feeding cells (syncytia) induced in plant roots during infection. The sequence is that of CLAVATA3/ESR (CLE)-related protein 1 from Globodera rostochiensis (Golden nematode worm).